A 297-amino-acid chain; its full sequence is MCAQPVANTKEVRWQKVLYERQPFPDNYVDRRFLEELRKNIYARKYQYWAVVFESSVVIQQLCSVCVFVVIWWYMDEGLLAPQWLFGTGLASSLIGYVLFDFIDGGEGRKKSGRTRWADLKSALVFITFTYGFSPVLKTLTESVSTDTIYAMAVFMLLGHLIFFDYGANAAIVSSTLSLNMAIFASVCLASRLPRSLHAFIMVTFAIQIFALWPMLQKKLKACTPRSYVGVTLLFAFSALGGLLSISAVGAILFALLLISISCLCPFYLIRLQLFKENIHGPWDEAEIKEDLSRFLS.

A run of 4 helical transmembrane segments spans residues 67-87 (VFVVIWWYMDEGLLAPQWLFG), 88-108 (TGLASSLIGYVLFDFIDGGEG), 153-173 (AVFMLLGHLIFFDYGANAAIV), and 239-259 (ALGGLLSISAVGAILFALLLI).

This sequence belongs to the PIGC family. In terms of assembly, component of the glycosylphosphatidylinositol-N-acetylglucosaminyltransferase (GPI-GnT) complex composed at least by PIGA, PIGC, PIGH, PIGP, PIGQ, PIGY and DPM2. Interacts with PIGQ. Interacts with the heterodimer PIGA:PIGH.

The protein localises to the endoplasmic reticulum membrane. It functions in the pathway glycolipid biosynthesis; glycosylphosphatidylinositol-anchor biosynthesis. Its function is as follows. Part of the glycosylphosphatidylinositol-N-acetylglucosaminyltransferase (GPI-GnT) complex that catalyzes the transfer of N-acetylglucosamine from UDP-N-acetylglucosamine to phosphatidylinositol and participates in the first step of GPI biosynthesis. This is Phosphatidylinositol N-acetylglucosaminyltransferase subunit C from Bos taurus (Bovine).